Here is a 339-residue protein sequence, read N- to C-terminus: MVEILKKPVTGRSVWQRAQVEDASQWTYVLDEGMRAEILEAAERINEQGLTVWDLDRKAVPLERAGKLVAQCVEQLEHGFGLAMLRGVPTEGLTVAESQVVMGVVGLHLGTAVAQNGHGDRVVSIRDYGKGRLNSKTIRGYQTNESLPWHSDAPDIAALLCLTQAKHGGEFHVASAMHIYNTLLQEAPELLGLYYAGVFFDYRGEEPPGEPPAYRNAIFGYHNGQLSCRYFLRNFADSGTAKLGFEQPEVEKLALDTFEEIASRPENHVSMRLEPGDMQLVDDNVTVHRRGAYSDEEDGSTDSSRHLLRLWINVENGRQFPTSLSTHRWGMKAAAKPTH.

Fe(2+) is bound by residues H150, D152, and H288.

The protein belongs to the TfdA dioxygenase family. In terms of assembly, homodimer. Requires Fe(2+) as cofactor.

The enzyme catalyses 3-(N-acetyl-N-hydroxy)aminopropylphosphonate + 2-oxoglutarate + O2 = (R)-(3-(acetylhydroxyamino)-2-hydroxypropyl)phosphonate + succinate + CO2. Its pathway is antibiotic biosynthesis. In terms of biological role, monooxygenase involved in the biosynthesis of the phosphonate antibiotic FR-33289, an antimalarial agent. Catalyzes the oxidative decarboxylation of the antibiotic FR-900098 (3-(N-acetyl-N-hydroxy)aminopropylphosphonate) to form FR-33289 ((R)-(3-(acetylhydroxyamino)-2-hydroxypropyl)phosphonate). The chain is FR-33289 synthase from Streptomyces rubellomurinus (strain ATCC 31215).